The primary structure comprises 489 residues: NAC domain-containing protein 74 (489 aa).

Residues Leu9–Arg159 form the NAC domain. The DNA-binding element occupies Ile108–Gly165. A compositionally biased stretch (basic and acidic residues) spans Lys413 to Ala427. Residues Lys413–Ser435 form a disordered region. A helical membrane pass occupies residues Trp456–Gly476.

As to expression, widely expressed.

The protein resides in the nucleus. The protein localises to the cell membrane. Functionally, transcription activator involved in heat and endoplasmic reticulum (ER) stress responses. Regulates the expression of genes involved in ER protein folding and heat stress-responsive genes. Binds directly to the promoter of BZIP74 and regulates its expression in response to heat stress. This Oryza sativa subsp. japonica (Rice) protein is NAC domain-containing protein 74.